We begin with the raw amino-acid sequence, 252 residues long: 7-cyano-7-deazaguanine synthase (252 aa).

Residue 22 to 32 (FSGGQDSTTCL) participates in ATP binding. Zn(2+)-binding residues include cysteine 215, cysteine 230, cysteine 233, and cysteine 236.

This sequence belongs to the QueC family. Zn(2+) is required as a cofactor.

The catalysed reaction is 7-carboxy-7-deazaguanine + NH4(+) + ATP = 7-cyano-7-deazaguanine + ADP + phosphate + H2O + H(+). It functions in the pathway purine metabolism; 7-cyano-7-deazaguanine biosynthesis. Functionally, catalyzes the ATP-dependent conversion of 7-carboxy-7-deazaguanine (CDG) to 7-cyano-7-deazaguanine (preQ(0)). This Granulibacter bethesdensis (strain ATCC BAA-1260 / CGDNIH1) protein is 7-cyano-7-deazaguanine synthase.